Reading from the N-terminus, the 622-residue chain is MAAAPRAGRRRGQPLLALLLLLLAPLPPGAPPGADAYFPEERWSPESPLQAPRVLIALLARNAAHALPTTLGALERLRHPRERTALWVATDHNMDNTSTVLREWLVAVKSLYHSVEWRPAEEPRSYPDEEGPKHWSDSRYEHVMKLRQAALKSARDMWADYILFVDADNLILNPDTLSLLIAENKTVVAPMLDSRAAYSNFWCGMTSQGYYKRTPAYIPIRKRDRRGCFAVPMVHSTFLIDLRKAASRNLAFYPPHPDYTWSFDDIIVFAFSCKQAEVQMYVCNKEEYGFLPVPLRAHSTLQDEAESFMHVQLEVMVKHPPAEPSRFISAPTKTPDKMGFDEVFMINLRRRQDRRERMLRALQAQEIECRLVEAVDGKAMNTSQVEALGIQMLPGYRDPYHGRPLTKGELGCFLSHYNIWKEVVDRGLQKSLVFEDDLRFEIFFKRRLMNLMRDVEREGLDWDLIYVGRKRMQVEHPEKAVPRVRNLVEADYSYWTLAYVISLQGARKLLAAEPLSKMLPVDEFLPVMFDKHPVSEYKAHFSLRNLHAFSVEPLLIYPTHYTGDDGYVSDTETSVVWNNEHVKTDWDRAKSQKMREQQALSREAKNSDVLQSPLDSAARDEL.

An N-terminal signal peptide occupies residues 1–29 (MAAAPRAGRRRGQPLLALLLLLLAPLPPG). 3 N-linked (GlcNAc...) asparagine glycosylation sites follow: Asn-96, Asn-184, and Asn-381. The segment covering 588–606 (RAKSQKMREQQALSREAKN) has biased composition (basic and acidic residues). Residues 588–622 (RAKSQKMREQQALSREAKNSDVLQSPLDSAARDEL) form a disordered region. The Endoplasmic reticulum retention motif signature appears at 619–622 (RDEL).

This sequence belongs to the glycosyltransferase 25 family. N-glycosylated. In terms of tissue distribution, ubiquitous with higher levels in placenta, heart, lung and spleen.

It localises to the endoplasmic reticulum lumen. It catalyses the reaction (5R)-5-hydroxy-L-lysyl-[collagen] + UDP-alpha-D-galactose = (5R)-5-O-(beta-D-galactosyl)-5-hydroxy-L-lysyl-[collagen] + UDP + H(+). Beta-galactosyltransferase that transfers beta-galactose to hydroxylysine residues of type I collagen. By acting on collagen glycosylation, facilitates the formation of collagen triple helix. Also involved in the biosynthesis of collagen type IV. This Homo sapiens (Human) protein is Procollagen galactosyltransferase 1 (COLGALT1).